Here is a 237-residue protein sequence, read N- to C-terminus: tRNA (guanine-N(1)-)-methyltransferase (237 aa).

S-adenosyl-L-methionine is bound by residues G113 and 133–138 (VGDFIV).

The protein belongs to the RNA methyltransferase TrmD family. As to quaternary structure, homodimer.

It localises to the cytoplasm. It carries out the reaction guanosine(37) in tRNA + S-adenosyl-L-methionine = N(1)-methylguanosine(37) in tRNA + S-adenosyl-L-homocysteine + H(+). In terms of biological role, specifically methylates guanosine-37 in various tRNAs. The sequence is that of tRNA (guanine-N(1)-)-methyltransferase from Hydrogenovibrio crunogenus (strain DSM 25203 / XCL-2) (Thiomicrospira crunogena).